A 583-amino-acid chain; its full sequence is Torsin-1A-interacting protein 1 (583 aa).

The Nuclear segment spans residues M1–W339. The segment at A23–A208 is disordered. A Phosphoserine modification is found at S60. Basic and acidic residues-rich tracts occupy residues F70–E101 and G115–Q132. Residues S134, S142, S155, and S157 each carry the phosphoserine modification. A compositionally biased stretch (polar residues) spans S166–M188. S189 is subject to Phosphoserine. T222 carries the phosphothreonine modification. A phosphoserine mark is found at S228, S231, and S242. A Glycyl lysine isopeptide (Lys-Gly) (interchain with G-Cter in SUMO2) cross-link involves residue K309. S316 bears the Phosphoserine mark. The chain crosses the membrane as a helical span at residues L340 to V360. Residues H356–L583 form an interaction with TOR1A region. The stretch at V360–K388 forms a coiled coil. Residues E361–L583 are Perinuclear space-facing. N399 carries N-linked (GlcNAc...) asparagine glycosylation.

Belongs to the TOR1AIP family. As to quaternary structure, interacts with ATP1B4. Interacts with TOR1A (ATP-bound). Interacts with TOR1B, TOR2A and TOR3A. Interacts with VIM.

Its subcellular location is the nucleus inner membrane. In terms of biological role, required for nuclear membrane integrity. Induces TOR1A and TOR1B ATPase activity and is required for their location on the nuclear membrane. Binds to A- and B-type lamins. Possible role in membrane attachment and assembly of the nuclear lamina. This Rattus norvegicus (Rat) protein is Torsin-1A-interacting protein 1 (Tor1aip1).